We begin with the raw amino-acid sequence, 82 residues long: Small ribosomal subunit protein bS18 (82 aa).

The protein belongs to the bacterial ribosomal protein bS18 family. Part of the 30S ribosomal subunit. Forms a tight heterodimer with protein bS6.

Functionally, binds as a heterodimer with protein bS6 to the central domain of the 16S rRNA, where it helps stabilize the platform of the 30S subunit. The polypeptide is Small ribosomal subunit protein bS18 (Methylobacterium nodulans (strain LMG 21967 / CNCM I-2342 / ORS 2060)).